Reading from the N-terminus, the 378-residue chain is Rhodopsin (378 aa).

The Extracellular segment spans residues 1–53; the sequence is MMSIASGPSHAAYTWTAQGGGFGNQTVVDKVPPEMLHLVDAHWYQFPPMNPLW. The N-linked (GlcNAc...) asparagine glycan is linked to asparagine 24. The helical transmembrane segment at 54-78 threads the bilayer; that stretch reads HAILGFVIGILGMISVIGNGMVIYI. Residues 79–90 are Cytoplasmic-facing; sequence FTTTKSLRTPSN. A helical membrane pass occupies residues 91–115; the sequence is LLVINLAISDFLMMLSMSPAMVINC. Residues 116 to 130 are Extracellular-facing; sequence YYETWVLGPLVCELY. An intrachain disulfide couples cysteine 127 to cysteine 204. A helical transmembrane segment spans residues 131–150; that stretch reads GLTGSLFGCGSIWTMTMIAF. The Cytoplasmic segment spans residues 151-169; it reads DRYNVIVKGLSAKPMTING. A helical membrane pass occupies residues 170–193; sequence ALLRILGIWFFSLGWTIAPMFGWN. Over 194–217 the chain is Extracellular; that stretch reads RYVPEGNMTACGTDYLTKDLLSRS. N-linked (GlcNAc...) asparagine glycosylation is present at asparagine 200. Residues 218 to 245 traverse the membrane as a helical segment; sequence YILVYSFFCYFLPLFLIIYSYFFIIQAV. At 246–280 the chain is on the cytoplasmic side; that stretch reads AAHEKNMREQAKKMNVASLRSAENQSTSAECKLAK. A helical transmembrane segment spans residues 281 to 304; sequence VALMTISLWFMAWTPYLVINYAGI. Over 305–311 the chain is Extracellular; sequence FETVKIN. Residues 312-336 traverse the membrane as a helical segment; sequence PLFTIWGSLFAKANAVYNPIVYGIS. Lysine 323 carries the N6-(retinylidene)lysine modification. Residues 337-378 lie on the Cytoplasmic side of the membrane; the sequence is HPKYRAALFQRFPSLACSSGPAGADTLSTTTTVTEGTEKPAA. The disordered stretch occupies residues 356 to 378; that stretch reads GPAGADTLSTTTTVTEGTEKPAA. The segment covering 362-371 has biased composition (low complexity); it reads TLSTTTTVTE.

This sequence belongs to the G-protein coupled receptor 1 family. Opsin subfamily. Post-translationally, phosphorylated on some or all of the serine and threonine residues present in the C-terminal region.

It is found in the membrane. Visual pigments are the light-absorbing molecules that mediate vision. They consist of an apoprotein, opsin, covalently linked to cis-retinal. This is Rhodopsin from Cataglyphis bombycina (Saharan silver ant).